We begin with the raw amino-acid sequence, 540 residues long: Phosphoenolpyruvate carboxykinase (ATP) (540 aa).

Substrate is bound at residue Arg65. Residue Lys87 is modified to N6-acetyllysine. Positions 207 and 213 each coordinate substrate. ATP contacts are provided by residues Lys213, His232, and 248 to 256 (GLSGTGKTT). Lys213 and His232 together coordinate Mn(2+). Mn(2+) is bound at residue Asp269. ATP contacts are provided by residues Glu297, Arg333, 449–450 (RI), and Thr455. Arg333 contributes to the substrate binding site. At Lys523 the chain carries N6-acetyllysine.

The protein belongs to the phosphoenolpyruvate carboxykinase (ATP) family. As to quaternary structure, monomer. Mn(2+) serves as cofactor.

It is found in the cytoplasm. It catalyses the reaction oxaloacetate + ATP = phosphoenolpyruvate + ADP + CO2. Its pathway is carbohydrate biosynthesis; gluconeogenesis. Its function is as follows. Involved in the gluconeogenesis. Catalyzes the conversion of oxaloacetate (OAA) to phosphoenolpyruvate (PEP) through direct phosphoryl transfer between the nucleoside triphosphate and OAA. The sequence is that of Phosphoenolpyruvate carboxykinase (ATP) from Escherichia coli O127:H6 (strain E2348/69 / EPEC).